The primary structure comprises 324 residues: Interleukin-12 subunit beta (324 aa).

The first 22 residues, 1–22 (MHLQQLVVSWFSLVWLASPIVA), serve as a signal peptide directing secretion. The region spanning 23-106 (IWELEKNVYV…LSQSLLLLHK (84 aa)) is the Ig-like C2-type domain. Cys-50 and Cys-90 are joined by a disulfide. N-linked (GlcNAc...) asparagine glycosylation is found at Asn-125, Asn-135, and Asn-218. Positions 233 to 324 (PPKNLQLNPL…WSEWASVSCN (92 aa)) constitute a Fibronectin type-III domain.

Belongs to the IL-12B family. As to quaternary structure, heterodimer with IL12A; disulfide-linked. The heterodimer is known as interleukin IL-12. Heterodimer with IL23A; disulfide-linked. The heterodimer is known as interleukin IL-23. Also secreted as a monomer. Interacts with NBR1; this interaction promotes IL-12 secretion.

The protein localises to the secreted. Functionally, cytokine that can act as a growth factor for activated T and NK cells, enhance the lytic activity of NK/lymphokine-activated killer cells, and stimulate the production of IFN-gamma by resting PBMC. Associates with IL23A to form the IL-23 interleukin, a heterodimeric cytokine which functions in innate and adaptive immunity. IL-23 may constitute with IL-17 an acute response to infection in peripheral tissues. IL-23 binds to a heterodimeric receptor complex composed of IL12RB1 and IL23R, activates the Jak-Stat signaling cascade, stimulates memory rather than naive T-cells and promotes production of pro-inflammatory cytokines. IL-23 induces autoimmune inflammation and thus may be responsible for autoimmune inflammatory diseases and may be important for tumorigenesis. In Sus scrofa (Pig), this protein is Interleukin-12 subunit beta (IL12B).